We begin with the raw amino-acid sequence, 129 residues long: D-ribose pyranase (129 aa).

Catalysis depends on H20, which acts as the Proton donor. Substrate-binding positions include D28, H96, and 118-120; that span reads YAN.

The protein belongs to the RbsD / FucU family. RbsD subfamily. In terms of assembly, homodecamer.

It is found in the cytoplasm. It catalyses the reaction beta-D-ribopyranose = beta-D-ribofuranose. Its pathway is carbohydrate metabolism; D-ribose degradation; D-ribose 5-phosphate from beta-D-ribopyranose: step 1/2. Functionally, catalyzes the interconversion of beta-pyran and beta-furan forms of D-ribose. This is D-ribose pyranase from Exiguobacterium sp. (strain ATCC BAA-1283 / AT1b).